The primary structure comprises 520 residues: Maturase K (520 aa).

Belongs to the intron maturase 2 family. MatK subfamily.

It is found in the plastid. Its subcellular location is the chloroplast. Usually encoded in the trnK tRNA gene intron. Probably assists in splicing its own and other chloroplast group II introns. The polypeptide is Maturase K (Linum perenne (Perennial flax)).